We begin with the raw amino-acid sequence, 209 residues long: Uracil phosphoribosyltransferase (209 aa).

5-phospho-alpha-D-ribose 1-diphosphate-binding positions include Arg-79, Arg-104, and 131–139 (DPMLATGNS). Uracil-binding positions include Ile-194 and 199 to 201 (GDA). A 5-phospho-alpha-D-ribose 1-diphosphate-binding site is contributed by Asp-200.

The protein belongs to the UPRTase family. Mg(2+) serves as cofactor.

The catalysed reaction is UMP + diphosphate = 5-phospho-alpha-D-ribose 1-diphosphate + uracil. Its pathway is pyrimidine metabolism; UMP biosynthesis via salvage pathway; UMP from uracil: step 1/1. With respect to regulation, allosterically activated by GTP. In terms of biological role, catalyzes the conversion of uracil and 5-phospho-alpha-D-ribose 1-diphosphate (PRPP) to UMP and diphosphate. This is Uracil phosphoribosyltransferase from Rhodococcus jostii (strain RHA1).